Here is a 336-residue protein sequence, read N- to C-terminus: MIQKNWQELIKPNKVEFASSGRTKATLVAEPLERGFGLTLGNALRRVLLSSLRGAAVTAVQIDGVLHEFSSIPGVREDVTDIVLNIKEIAIKMDGDDAKRMVVRKQGPGVVTAGDIQTVGDIEILNPNHVICTLDEGAEIRMEFTVNNGKGYVPADRNRSEDAPIGLIPVDSLYSPVKKVSYKVENTREGQVLDYDKLTMSIETDGSVTGEDAIAFAARILQDQLSVFVNFDEPQKETEEEAVTELAFNPALLKKVDELELSVRSANCLKNDNIVYIGDLIQKTEAEMLRTPNFGRKSLNEIKEVLASMGLHLGMEVPSWPPENIEDLAKRYEDQY.

Residues 1–232 (MIQKNWQELI…DQLSVFVNFD (232 aa)) form an alpha N-terminal domain (alpha-NTD) region. Residues 248-336 (FNPALLKKVD…DLAKRYEDQY (89 aa)) form an alpha C-terminal domain (alpha-CTD) region.

It belongs to the RNA polymerase alpha chain family. Homodimer. The RNAP catalytic core consists of 2 alpha, 1 beta, 1 beta' and 1 omega subunit. When a sigma factor is associated with the core the holoenzyme is formed, which can initiate transcription.

It catalyses the reaction RNA(n) + a ribonucleoside 5'-triphosphate = RNA(n+1) + diphosphate. DNA-dependent RNA polymerase catalyzes the transcription of DNA into RNA using the four ribonucleoside triphosphates as substrates. The sequence is that of DNA-directed RNA polymerase subunit alpha from Sinorhizobium medicae (strain WSM419) (Ensifer medicae).